A 155-amino-acid chain; its full sequence is uncharacterized protein (155 aa).

Residues 28–38 (KKGKDRPREDG) show a composition bias toward basic and acidic residues. A disordered region spans residues 28-52 (KKGKDRPREDGTQQQPSESKGEAAC).

This is an uncharacterized protein from Dryophytes versicolor (chameleon treefrog).